A 157-amino-acid chain; its full sequence is S-ribosylhomocysteine lyase (157 aa).

Positions 54, 58, and 124 each coordinate Fe cation.

It belongs to the LuxS family. As to quaternary structure, homodimer. The cofactor is Fe cation.

It carries out the reaction S-(5-deoxy-D-ribos-5-yl)-L-homocysteine = (S)-4,5-dihydroxypentane-2,3-dione + L-homocysteine. In terms of biological role, involved in the synthesis of autoinducer 2 (AI-2) which is secreted by bacteria and is used to communicate both the cell density and the metabolic potential of the environment. The regulation of gene expression in response to changes in cell density is called quorum sensing. Catalyzes the transformation of S-ribosylhomocysteine (RHC) to homocysteine (HC) and 4,5-dihydroxy-2,3-pentadione (DPD). The sequence is that of S-ribosylhomocysteine lyase from Levilactobacillus brevis (strain ATCC 367 / BCRC 12310 / CIP 105137 / JCM 1170 / LMG 11437 / NCIMB 947 / NCTC 947) (Lactobacillus brevis).